We begin with the raw amino-acid sequence, 367 residues long: Peptide chain release factor 2 (367 aa).

The residue at position 254 (glutamine 254) is an N5-methylglutamine.

The protein belongs to the prokaryotic/mitochondrial release factor family. In terms of processing, methylated by PrmC. Methylation increases the termination efficiency of RF2.

The protein localises to the cytoplasm. Functionally, peptide chain release factor 2 directs the termination of translation in response to the peptide chain termination codons UGA and UAA. This Neisseria meningitidis serogroup B (strain ATCC BAA-335 / MC58) protein is Peptide chain release factor 2.